The following is a 368-amino-acid chain: Cyclic AMP-responsive element-binding protein 3 (368 aa).

The transcription activation (acidic) stretch occupies residues 1–95; that stretch reads MSHMELALDP…LSQEHVSIDL (95 aa). Residues 1–229 are Cytoplasmic-facing; sequence MSHMELALDP…VIQTANKASS (229 aa). Short sequence motifs (LXXLL motif) lie at residues 16–20 and 57–61; these read LGFLL and LSCLP. An HCFC1-binding-motif (HBM) motif is present at residues 81–84; that stretch reads DHTY. The bZIP domain occupies 153–216; that stretch reads VLKRVRRKIR…LSLLDQLRRL (64 aa). The tract at residues 155–184 is basic motif; it reads KRVRRKIRNKKSAQESRRKKKVYVGGLESR. The segment at 186–193 is leucine-zipper; sequence LKYTAQNL. The chain crosses the membrane as a helical; Signal-anchor for type II membrane protein span at residues 230–250; it reads SSTCVLVLLFSFCLLLVPAMY. At 251 to 368 the chain is on the lumenal side; it reads SSDTRGSLPA…SVILQGRYSG (118 aa). N-linked (GlcNAc...) asparagine glycosylation occurs at N344.

The protein belongs to the bZIP family. ATF subfamily. In terms of assembly, homodimer. Interacts with HCFC1; the interaction is required to stimulate CREB3 transcriptional activity. Interacts with CREBZF; the interaction occurs only in combination with HCFC1. Interacts (via central part and transmembrane region) with DCSTAMP (via C-terminus cytoplasmic domain). Interacts with OS9. Interacts (via leucine-zipper domain) with CREBRF (via leucine-zipper domain); the interaction occurs only after CREB3 activation and promotes CREB3 degradation. Interacts (via C-terminal domain) with CCR1. Post-translationally, first proteolytically cleaved by site-1 protease (S1P) that generates membrane-associated N-terminus and a luminal C-terminus forms. The membrane-associated N-terminus form is further proteolytically processed probably by the site-2 protease (S2P) through a regulated intramembrane proteolysis (RIP), releasing the transcriptional active processed cyclic AMP-responsive element-binding protein 3 form, which is transported to the nucleus. The proteolytic cleavage is strongly induced during dendritic cell (DC) maturation and inhibited by DCSTAMP. That form is rapidly degraded. In terms of processing, N-glycosylated. As to expression, expressed in trigeminal ganglia (at protein level).

It is found in the endoplasmic reticulum membrane. The protein resides in the golgi apparatus. It localises to the nucleus. The protein localises to the cytoplasm. In terms of biological role, endoplasmic reticulum (ER)-bound sequence-specific transcription factor that directly binds DNA and activates transcription. Plays a role in the unfolded protein response (UPR), promoting cell survival versus ER stress-induced apoptotic cell death. Also involved in cell proliferation, migration and differentiation, tumor suppression and inflammatory gene expression. Acts as a positive regulator of LKN-1/CCL15-induced chemotaxis signaling of leukocyte cell migration. Associates with chromatin to the HERPUD1 promoter. Also induces transcriptional activation of chemokine receptors. Functions as a negative transcriptional regulator in ligand-induced transcriptional activation of the glucocorticoid receptor NR3C1 by recruiting and activating histone deacetylases (HDAC1, HDAC2 and HDAC6). Also decreases the acetylation level of histone H4. Does not promote the chemotactic activity of leukocyte cells. Its function is as follows. This is the transcriptionally active form that translocates to the nucleus and activates unfolded protein response (UPR) target genes during endoplasmic reticulum (ER) stress response. Binds the cAMP response element (CRE) (consensus: 5'-GTGACGT[AG][AG]-3') and C/EBP sequences present in many promoters to activate transcription of the genes. Binds to the unfolded protein response element (UPRE) consensus sequences sites. Binds DNA to the 5'-CCAC[GA]-3'half of ERSE II (5'-ATTGG-N-CCACG-3'). This chain is Cyclic AMP-responsive element-binding protein 3 (CREB3), found in Bos taurus (Bovine).